The primary structure comprises 377 residues: Transcription factor ast-1 (377 aa).

Positions 72 to 143 are disordered; it reads PNRMLYNDNT…SNGSSSSTES (72 aa). Low complexity-rich tracts occupy residues 96–109 and 118–142; these read STSASSSGNSTSSK and TESSNSSGNGAAATSGSNGSSSSTE. The ETS DNA-binding region spans 214 to 294; it reads TQLWQFLLEL…HGKRYAYKFD (81 aa).

It belongs to the ETS family. Expressed in the A-neurons in the male-specific genital sensilla (simple sense organs) known as rays.

It localises to the nucleus. The protein resides in the cell projection. Its subcellular location is the neuron projection. In terms of biological role, transcription factor. Probably binds to DNA sequences containing the consensus motif 5'-CGGA[AT][AG]-3'. Positively modulates expression of dopamine pathway genes, acting as a terminal selector for differentiation of dopaminergic neurons; may act in concert with homeobox proteins ceh-40, ceh-43 and ceh-20. Required for axon navigation in some interneurons, perhaps acting in the same pathways as basement membrane protein nid-1 and unc-6/netrin. Plays a role in the differentiation of the ventral cord pioneer neuron AVG. Required for morphogenesis of the pharynx. The polypeptide is Transcription factor ast-1 (Caenorhabditis elegans).